The chain runs to 92 residues: UPF0223 protein SERP0684 (92 aa).

Belongs to the UPF0223 family.

The protein is UPF0223 protein SERP0684 of Staphylococcus epidermidis (strain ATCC 35984 / DSM 28319 / BCRC 17069 / CCUG 31568 / BM 3577 / RP62A).